The chain runs to 234 residues: Triosephosphate isomerase (234 aa).

8-10 (NFK) provides a ligand contact to substrate. The active-site Electrophile is the H90. The active-site Proton acceptor is the E159. Substrate contacts are provided by G165 and S197.

The protein belongs to the triosephosphate isomerase family. Homodimer.

The protein localises to the cytoplasm. The enzyme catalyses D-glyceraldehyde 3-phosphate = dihydroxyacetone phosphate. It participates in carbohydrate biosynthesis; gluconeogenesis. Its pathway is carbohydrate degradation; glycolysis; D-glyceraldehyde 3-phosphate from glycerone phosphate: step 1/1. Functionally, involved in the gluconeogenesis. Catalyzes stereospecifically the conversion of dihydroxyacetone phosphate (DHAP) to D-glyceraldehyde-3-phosphate (G3P). The chain is Triosephosphate isomerase from Helicobacter acinonychis (strain Sheeba).